The following is a 300-amino-acid chain: Protein Bel-1 (300 aa).

Residues Met-1–Arg-50 are disordered. Residues Val-10 to Ser-23 are compositionally biased toward polar residues. The DNA-binding element occupies Ser-89 to His-200. The interval Phe-209–Leu-244 is disordered. The span at Lys-211–Arg-222 shows a compositional bias: basic residues. The Nuclear localization signal motif lies at Lys-214 to Arg-223. The segment at Ser-224–Leu-300 is transactivation domain. A compositionally biased stretch (polar residues) spans Asn-227–Met-237.

As to quaternary structure, homodimer or homomultimer. Forms complexes with the host nuclear factors NFIA, NFIB, NFIC or NFIX.

Its subcellular location is the host nucleus. Its function is as follows. Transcriptional transactivator that activates the viral internal promoter (IP), thereby enhancing its own expression. This transactivation is repressed by nuclear factor I. Also transactivates the long terminal repeat (LTR) promoter, thereby inducing structural gene expression, initiating the late phase of infection. It is therefore a key regulator of viral gene expression. It directly binds to and activates DNA target sites of viral promoters and those of distinct cellular genes. Required for viral replication. In Human spumaretrovirus (SFVcpz(hu)), this protein is Protein Bel-1 (bel1).